Consider the following 392-residue polypeptide: Iripin-4 (392 aa).

The first 16 residues, 1–16 (MRSLATFMSLLTICWG), serve as a signal peptide directing secretion. N-linked (GlcNAc...) asparagine glycans are attached at residues Asn104, Asn130, and Asn265.

The protein belongs to the serpin family. Female salivary gland.

The protein localises to the secreted. Functionally, serpin with unknown function. Weakly inhibits human granzyme B (GZMB). Acts as a substrate for porcine elastase. This is Iripin-4 from Ixodes ricinus (Common tick).